The following is a 342-amino-acid chain: Peroxisomal membrane protein import receptor PEX19 (342 aa).

Residues methionine 1–glutamate 18 are compositionally biased toward acidic residues. Disordered stretches follow at residues methionine 1–leucine 68 and cysteine 119–asparagine 141. Residues serine 41–aspartate 54 are compositionally biased toward basic and acidic residues. Serine 62 carries the post-translational modification Phosphoserine. Serine 304 carries the post-translational modification Phosphoserine. The tract at residues isoleucine 321 to glutamine 342 is disordered. Positions leucine 331 to glutamine 342 are enriched in basic and acidic residues. Cysteine 339 carries the cysteine methyl ester modification. Cysteine 339 carries the S-farnesyl cysteine lipid modification. A propeptide spans lysine 340–glutamine 342 (removed in mature form).

This sequence belongs to the peroxin-19 family. In terms of assembly, interacts (farnesylated) with PEX3; farnesylation is required for this interaction. Interacts with PEX2, PEX5, PEX10, PEX11, PEX12, PEX13, PEX14, PEX17, PEX22, PEX25, PEX30 and PEX32; the interaction requires well-defined PEX19-binding sites within the peroxisomal membrane protein targeting signal (mPTS) of the PMPs and is independent on the presence of PEX3. Interacts with VPS1.

It localises to the cytoplasm. Its subcellular location is the peroxisome membrane. The protein localises to the endoplasmic reticulum membrane. Required for proper post-translational import and stabilization of peroxisomal membrane proteins (PMPs). Acts as a cytosolic import receptor for PMPs and delivers them to the docking factor PEX3 at the peroxisomal membrane for subsequent insertion into the membrane. Acts as a chaperone in stabilizing or maintaining PMPs in the lipid bilayer. Directs PEX17, a peripheral component of the peroxisomal matrix protein translocation machinery, to peroxisomes. Stabilizes VPS1, a protein required for peroxisomal fission, at the peroxisomal membrane. Also acts in conjunction with PEX3 in the formation of peroxisomes from preperoxisomal compartments at the endoplasmic reticulum during de novo peroxisome synthesis, probably via the import of additional PMPs. The sequence is that of Peroxisomal membrane protein import receptor PEX19 (PEX19) from Saccharomyces cerevisiae (strain ATCC 204508 / S288c) (Baker's yeast).